The primary structure comprises 601 residues: Elongation factor 4 (601 aa).

Residues E6 to E188 enclose the tr-type G domain. GTP contacts are provided by residues D18 to T23 and N135 to D138.

Belongs to the TRAFAC class translation factor GTPase superfamily. Classic translation factor GTPase family. LepA subfamily.

It is found in the cell inner membrane. It carries out the reaction GTP + H2O = GDP + phosphate + H(+). Required for accurate and efficient protein synthesis under certain stress conditions. May act as a fidelity factor of the translation reaction, by catalyzing a one-codon backward translocation of tRNAs on improperly translocated ribosomes. Back-translocation proceeds from a post-translocation (POST) complex to a pre-translocation (PRE) complex, thus giving elongation factor G a second chance to translocate the tRNAs correctly. Binds to ribosomes in a GTP-dependent manner. In Hydrogenovibrio crunogenus (strain DSM 25203 / XCL-2) (Thiomicrospira crunogena), this protein is Elongation factor 4.